The chain runs to 448 residues: Protein chibby homolog 2 (448 aa).

Serine 41, serine 86, serine 89, serine 97, serine 124, serine 144, serine 148, and serine 150 each carry phosphoserine. Residues 163-198 (AKEFVLQEENKSLREENKALREENRMLRKENKILQV) are a coiled coil. Positions 206–226 (SLGREESRPPSPLPQKDSASL) are disordered. A phosphoserine mark is found at serine 212 and serine 225. Residues 242–267 (KEDSTLQLLREENRALQQLLEQKQAY) are a coiled coil. Residues 270-321 (QTEDAAAPAEESKPAPSPHEEPCSPGLLQDQGSGLSSHFEEPRGPPAPQEDS) are disordered. Basic and acidic residues predominate over residues 279–291 (EESKPAPSPHEEP). Residues serine 335 and serine 338 each carry the phosphoserine modification. A coiled-coil region spans residues 356–414 (LQLLREMRQALQALLKENRLLQEENRTLQVLRAEHRGFQEENKALWENNKLKLQQKLVI).

The protein belongs to the chibby family. SPERT subfamily. Homodimer. Binds to NEK1.

In Macaca fascicularis (Crab-eating macaque), this protein is Protein chibby homolog 2 (CBY2).